The chain runs to 99 residues: MTIIGNLSCINHVGLGNFSKKSSNYSNFSNSISFGKNQNSDQIIDAVLGLIIRDGGIVDGLFGNGSSLNKFFSQFFGKSIYKNRSLGNNTKLYKKIKKL.

This is an uncharacterized protein from Dictyostelium discoideum (Social amoeba).